Consider the following 391-residue polypeptide: Phosphoglycerate kinase (391 aa).

Substrate is bound by residues 21-23 (DLN), Arg36, 59-62 (HLGR), Arg113, and Arg146. Residues Lys197, Glu319, and 345–348 (GGDT) contribute to the ATP site.

It belongs to the phosphoglycerate kinase family. In terms of assembly, monomer.

The protein localises to the cytoplasm. The catalysed reaction is (2R)-3-phosphoglycerate + ATP = (2R)-3-phospho-glyceroyl phosphate + ADP. The protein operates within carbohydrate degradation; glycolysis; pyruvate from D-glyceraldehyde 3-phosphate: step 2/5. In Shewanella sp. (strain W3-18-1), this protein is Phosphoglycerate kinase.